A 230-amino-acid polypeptide reads, in one-letter code: Uracil-DNA glycosylase (230 aa).

Asp-71 acts as the Proton acceptor in catalysis.

The protein belongs to the uracil-DNA glycosylase (UDG) superfamily. UNG family.

It localises to the cytoplasm. It catalyses the reaction Hydrolyzes single-stranded DNA or mismatched double-stranded DNA and polynucleotides, releasing free uracil.. Excises uracil residues from the DNA which can arise as a result of misincorporation of dUMP residues by DNA polymerase or due to deamination of cytosine. The sequence is that of Uracil-DNA glycosylase from Nocardioides sp. (strain ATCC BAA-499 / JS614).